Consider the following 333-residue polypeptide: Cysteine protease (333 aa).

The signal sequence occupies residues M1–C18. The propeptide at K19 to N108 is activation peptide. N93 carries an N-linked (GlcNAc...) asparagine glycan. 2 disulfides stabilise this stretch: C134/C182 and C168/C214. C137 is an active-site residue. Active-site residues include H281 and N301.

The protein belongs to the peptidase C1 family. Homodimer.

Its function is as follows. Cysteine protease. This Blomia tropicalis (Mite) protein is Cysteine protease.